A 472-amino-acid polypeptide reads, in one-letter code: MVNLVIVSHSARLGEGVGELARQMLMNDGCKLAIAAGIDDPASPIGTDPIKVMEAIESVADADHILVMMDIGSALLSAETALDLLDPAIAAKVRLCAAPLVEGTLAATVSAAAGAGIDKVIEDAMNALEAKRVQLGLPSQPQHASLTAAPVDDRDARSVSVVIQNHNGLHVRPASKLVAALAGFNADLVLEKGGKCVTPDSLNQIALLQVRRNDTLRLLARGPDADAALAAFQALAAENFGEPTEAAPARRPASADRVEGKVVLYPQPQDRISRETSAAIGQQQLRLKRAIDRTLEDLSALTTLAEATFSADIAAIFSGHHTLLDDPDLYAAACDIIRDEQCSAAWAWQQVLSDLSQQYRHLDDAYLQARYIDIEDILHRTLRHLNERNEALPQFSAPSILVADDIFPSTVLQLNAEQVKGICLQAGSELSHGAIIARQAGIAMLCQQSDALTLQDGENVILDIPGKRVIRG.

The PTS EIIA type-4 domain occupies 1–135; sequence MVNLVIVSHS…NALEAKRVQL (135 aa). H9 functions as the Tele-phosphohistidine intermediate in the catalytic mechanism. The 88-residue stretch at 156 to 243 folds into the HPr domain; sequence ARSVSVVIQN…ALAAENFGEP (88 aa). H170 (pros-phosphohistidine intermediate) is an active-site residue. The PTS EI-like, N-terminal part stretch occupies residues 266-472; it reads PQPQDRISRE…DIPGKRVIRG (207 aa). Catalysis depends on H432, which acts as the Tele-phosphohistidine intermediate.

The protein belongs to the PEP-utilizing enzyme family. In terms of assembly, homodimer. The dihydroxyacetone kinase complex is composed of a homodimer of DhaM, a homodimer of DhaK and the subunit DhaL.

It carries out the reaction dihydroxyacetone + phosphoenolpyruvate = dihydroxyacetone phosphate + pyruvate. Component of the dihydroxyacetone kinase complex, which is responsible for the phosphoenolpyruvate (PEP)-dependent phosphorylation of dihydroxyacetone. DhaM serves as the phosphoryl donor. Is phosphorylated by phosphoenolpyruvate in an EI- and HPr-dependent reaction, and a phosphorelay system on histidine residues finally leads to phosphoryl transfer to DhaL and dihydroxyacetone. This chain is PEP-dependent dihydroxyacetone kinase, phosphoryl donor subunit DhaM, found in Klebsiella michiganensis (strain ATCC 8724 / DSM 4798 / JCM 20051 / NBRC 3318 / NRRL B-199 / KCTC 1686 / BUCSAV 143 / CCM 1901).